We begin with the raw amino-acid sequence, 227 residues long: Cytidylate kinase (227 aa).

10 to 18 (GPASSGKST) serves as a coordination point for ATP.

Belongs to the cytidylate kinase family. Type 1 subfamily.

The protein localises to the cytoplasm. It catalyses the reaction CMP + ATP = CDP + ADP. The catalysed reaction is dCMP + ATP = dCDP + ADP. The chain is Cytidylate kinase from Streptococcus mutans serotype c (strain ATCC 700610 / UA159).